The chain runs to 794 residues: Phosphoribosylformylglycinamidine synthase subunit PurL (794 aa).

Residue H47 is part of the active site. Y50 and K89 together coordinate ATP. A Mg(2+)-binding site is contributed by E91. Substrate-binding positions include 92 to 95 (SHNH) and R114. The Proton acceptor role is filled by H93. D115 is a Mg(2+) binding site. Q238 contributes to the substrate binding site. D266 serves as a coordination point for Mg(2+). 310–312 (ESQ) contacts substrate. Positions 522 and 559 each coordinate ATP. N560 is a binding site for Mg(2+). Position 562 (S562) interacts with substrate.

The protein belongs to the FGAMS family. Monomer. Part of the FGAM synthase complex composed of 1 PurL, 1 PurQ and 2 PurS subunits.

It localises to the cytoplasm. It carries out the reaction N(2)-formyl-N(1)-(5-phospho-beta-D-ribosyl)glycinamide + L-glutamine + ATP + H2O = 2-formamido-N(1)-(5-O-phospho-beta-D-ribosyl)acetamidine + L-glutamate + ADP + phosphate + H(+). The protein operates within purine metabolism; IMP biosynthesis via de novo pathway; 5-amino-1-(5-phospho-D-ribosyl)imidazole from N(2)-formyl-N(1)-(5-phospho-D-ribosyl)glycinamide: step 1/2. Part of the phosphoribosylformylglycinamidine synthase complex involved in the purines biosynthetic pathway. Catalyzes the ATP-dependent conversion of formylglycinamide ribonucleotide (FGAR) and glutamine to yield formylglycinamidine ribonucleotide (FGAM) and glutamate. The FGAM synthase complex is composed of three subunits. PurQ produces an ammonia molecule by converting glutamine to glutamate. PurL transfers the ammonia molecule to FGAR to form FGAM in an ATP-dependent manner. PurS interacts with PurQ and PurL and is thought to assist in the transfer of the ammonia molecule from PurQ to PurL. The protein is Phosphoribosylformylglycinamidine synthase subunit PurL of Prochlorococcus marinus (strain MIT 9313).